A 411-amino-acid chain; its full sequence is MSIGLPRGVQDILPDEIPFWHLIENIARSLFEKYNYEEIRTPIFEFTELFVKGTGETTDIVMKEMYTFQDKKGRSLTLRPEGTPGVIRAYLMNKIYTTKPIWKVYYIGPMFRYERPQSGRYRQFHQLGVEVLGRKDPYIDFEVISLAVEILKSLKLENLEIEINSLGCLKCRPAYREALKNYFYQYKDLLSPIDQERLERNPLRILDSKDEKIIPLKENAPQPLDFLCNDCKDHFDKVLRYLQEASLNFKISPKLVRGLDYYTRTVFEITTTSLGAQNAVVGGGRYDNLVETYGGPSTPGLGFALGMERLILLIKQQDKIKIEKPSLFFLAIENEKYIKKAVEISKILRINHRVEIGSPNEPLRTQLKWADKLNSDYVIFINQMIEKDILRIKNFKTGEEKEIRIENLKEL.

This sequence belongs to the class-II aminoacyl-tRNA synthetase family. As to quaternary structure, homodimer.

Its subcellular location is the cytoplasm. It catalyses the reaction tRNA(His) + L-histidine + ATP = L-histidyl-tRNA(His) + AMP + diphosphate + H(+). The protein is Histidine--tRNA ligase of Dictyoglomus turgidum (strain DSM 6724 / Z-1310).